The primary structure comprises 365 residues: 3-isopropylmalate dehydrogenase (365 aa).

80 to 93 (GPKWADNTGDQRPE) lines the NAD(+) pocket. Substrate-binding residues include Arg100, Arg110, Arg138, and Asp223. Mg(2+)-binding residues include Asp223, Asp247, and Asp251. 280-292 (GSAPDIAGQDVAN) serves as a coordination point for NAD(+). Residues 337-365 (NEEDASTSAFGREVATRAADSVPQNAPTP) form a disordered region.

It belongs to the isocitrate and isopropylmalate dehydrogenases family. LeuB type 1 subfamily. In terms of assembly, homodimer. The cofactor is Mg(2+). Mn(2+) serves as cofactor.

Its subcellular location is the cytoplasm. The catalysed reaction is (2R,3S)-3-isopropylmalate + NAD(+) = 4-methyl-2-oxopentanoate + CO2 + NADH. The protein operates within amino-acid biosynthesis; L-leucine biosynthesis; L-leucine from 3-methyl-2-oxobutanoate: step 3/4. In terms of biological role, catalyzes the oxidation of 3-carboxy-2-hydroxy-4-methylpentanoate (3-isopropylmalate) to 3-carboxy-4-methyl-2-oxopentanoate. The product decarboxylates to 4-methyl-2 oxopentanoate. This Salinibacter ruber (strain DSM 13855 / M31) protein is 3-isopropylmalate dehydrogenase.